The primary structure comprises 475 residues: Ribulose bisphosphate carboxylase large chain (475 aa).

The propeptide occupies 1 to 2; sequence MS. N-acetylproline is present on Pro3. Position 14 is an N6,N6,N6-trimethyllysine (Lys14). Residues Asn123 and Thr173 each coordinate substrate. The active-site Proton acceptor is the Lys175. Lys177 provides a ligand contact to substrate. The Mg(2+) site is built by Lys201, Asp203, and Glu204. At Lys201 the chain carries N6-carboxylysine. The active-site Proton acceptor is His294. Substrate contacts are provided by Arg295, His327, and Ser379.

Belongs to the RuBisCO large chain family. Type I subfamily. In terms of assembly, heterohexadecamer of 8 large chains and 8 small chains; disulfide-linked. The disulfide link is formed within the large subunit homodimers. Mg(2+) serves as cofactor. The disulfide bond which can form in the large chain dimeric partners within the hexadecamer appears to be associated with oxidative stress and protein turnover.

It is found in the plastid. The protein localises to the chloroplast. The catalysed reaction is 2 (2R)-3-phosphoglycerate + 2 H(+) = D-ribulose 1,5-bisphosphate + CO2 + H2O. The enzyme catalyses D-ribulose 1,5-bisphosphate + O2 = 2-phosphoglycolate + (2R)-3-phosphoglycerate + 2 H(+). In terms of biological role, ruBisCO catalyzes two reactions: the carboxylation of D-ribulose 1,5-bisphosphate, the primary event in carbon dioxide fixation, as well as the oxidative fragmentation of the pentose substrate in the photorespiration process. Both reactions occur simultaneously and in competition at the same active site. In Psilotum nudum (Whisk fern), this protein is Ribulose bisphosphate carboxylase large chain.